A 708-amino-acid chain; its full sequence is DNA ligase 2 (708 aa).

NAD(+) contacts are provided by residues 71 to 75 (DADYD), 121 to 122 (SL), and E153. The active-site N6-AMP-lysine intermediate is K155. NAD(+) contacts are provided by R176, E213, K330, and K354. Positions 448, 451, 466, and 471 each coordinate Zn(2+). Residues 627-708 (ADAGTLAGKE…LLRLAEAAPE (82 aa)) enclose the BRCT domain.

The protein belongs to the NAD-dependent DNA ligase family. LigA subfamily. Requires Mg(2+) as cofactor. Mn(2+) is required as a cofactor.

It carries out the reaction NAD(+) + (deoxyribonucleotide)n-3'-hydroxyl + 5'-phospho-(deoxyribonucleotide)m = (deoxyribonucleotide)n+m + AMP + beta-nicotinamide D-nucleotide.. Functionally, DNA ligase that catalyzes the formation of phosphodiester linkages between 5'-phosphoryl and 3'-hydroxyl groups in double-stranded DNA using NAD as a coenzyme and as the energy source for the reaction. It is essential for DNA replication and repair of damaged DNA. This is DNA ligase 2 from Opitutus terrae (strain DSM 11246 / JCM 15787 / PB90-1).